The sequence spans 27 residues: Endoglucanase gh5 (27 aa).

Glu6 acts as the Nucleophile in catalysis.

The catalysed reaction is Endohydrolysis of (1-&gt;4)-beta-D-glucosidic linkages in cellulose, lichenin and cereal beta-D-glucans.. Activity is stimulated by zinc ions, potassium ions and DTT. Activity is inhibited by manganese and chloride ions. Endoglucanase (EG) that cleaves the internal beta-1,4-glucosidic bonds in cellulose. This is Endoglucanase gh5 from Fomes meliae (Fomitopsis meliae).